The following is a 670-amino-acid chain: Tripeptidyl-peptidase SED1 (670 aa).

The signal sequence occupies residues 1-20; sequence MSTMIFMYFIYIVLYASGIA. The propeptide at 21 to 231 is removed in mature form; the sequence is ANLSYHVHEK…VGLLKNKILS (211 aa). The Peptidase S53 domain occupies 241 to 669; the sequence is LITPDCLRAL…DRMLDLFLQL (429 aa). Catalysis depends on charge relay system residues glutamate 318 and aspartate 322. 5 N-linked (GlcNAc...) asparagine glycosylation sites follow: asparagine 334, asparagine 387, asparagine 488, asparagine 508, and asparagine 551. Serine 586 serves as the catalytic Charge relay system. Ca(2+) contacts are provided by aspartate 627, valine 628, glycine 647, and aspartate 649.

Requires Ca(2+) as cofactor.

It localises to the secreted. It is found in the extracellular space. The catalysed reaction is Release of an N-terminal tripeptide from a polypeptide.. In terms of biological role, secreted tripeptidyl-peptidase which degrades proteins at acidic pHs and is involved in virulence. This chain is Tripeptidyl-peptidase SED1 (SED1), found in Arthroderma otae (strain ATCC MYA-4605 / CBS 113480) (Microsporum canis).